Consider the following 142-residue polypeptide: Hemoglobin subunit alpha (142 aa).

Ser-1 is modified (N-acetylserine). A Globin domain is found at 1–142 (SLSDKDKAAV…VALALAERYR (142 aa)). His-59 provides a ligand contact to O2. His-88 contacts heme b.

It belongs to the globin family. In terms of assembly, hb1 is a heterotetramer of two alpha chains and two beta-1 chains, while Hb2 is a heterotetramer of two alpha chains and two beta-2 chains. As to expression, red blood cells.

Functionally, involved in oxygen transport from gills to the various peripheral tissues. The sequence is that of Hemoglobin subunit alpha (hba) from Cygnodraco mawsoni (Antarctic dragonfish).